Here is a 266-residue protein sequence, read N- to C-terminus: Dihydropteroate synthase (266 aa).

The region spanning 12–260 is the Pterin-binding domain; that stretch reads AAIMGILNVT…DVKANQEIVA (249 aa). Mg(2+) is bound at residue Asn-19. Residues Thr-59, Asp-93, Asn-112, Asp-176, Lys-212, and 248 to 250 each bind (7,8-dihydropterin-6-yl)methyl diphosphate; that span reads RVH.

The protein belongs to the DHPS family. Homodimer or homotrimer. It depends on Mg(2+) as a cofactor.

The enzyme catalyses (7,8-dihydropterin-6-yl)methyl diphosphate + 4-aminobenzoate = 7,8-dihydropteroate + diphosphate. Its pathway is cofactor biosynthesis; tetrahydrofolate biosynthesis; 7,8-dihydrofolate from 2-amino-4-hydroxy-6-hydroxymethyl-7,8-dihydropteridine diphosphate and 4-aminobenzoate: step 1/2. Its function is as follows. Catalyzes the condensation of para-aminobenzoate (pABA) with 6-hydroxymethyl-7,8-dihydropterin diphosphate (DHPt-PP) to form 7,8-dihydropteroate (H2Pte), the immediate precursor of folate derivatives. This is Dihydropteroate synthase (folP) from Streptococcus pyogenes.